The primary structure comprises 233 residues: Large ribosomal subunit protein uL1 (233 aa).

It belongs to the universal ribosomal protein uL1 family. As to quaternary structure, part of the 50S ribosomal subunit.

Functionally, binds directly to 23S rRNA. Forms the L1 stalk. Unlike the case in the Thermus thermophilus 70S ribosome, this protein is not seen to block the exit path of the E site tRNA. It is clear that the protein in the structure is flexible however, so this is probably due to its position in these crystals. Protein L1 is also a translational repressor protein, it controls the translation of the L11 operon by binding to its mRNA. The protein is Large ribosomal subunit protein uL1 (rplA) of Deinococcus radiodurans (strain ATCC 13939 / DSM 20539 / JCM 16871 / CCUG 27074 / LMG 4051 / NBRC 15346 / NCIMB 9279 / VKM B-1422 / R1).